We begin with the raw amino-acid sequence, 318 residues long: NAD(P)H-dependent D-xylose reductase (318 aa).

Residue Tyr-48 is the Proton donor of the active site. His-110 is a substrate binding site. Residues 165-166 (SN), 214-223 (SSFGPQSFVE), and 270-280 (KSNTVPRLLEN) each bind NAD(+).

This sequence belongs to the aldo/keto reductase family.

It catalyses the reaction xylitol + NAD(+) = D-xylose + NADH + H(+). The catalysed reaction is xylitol + NADP(+) = D-xylose + NADPH + H(+). It participates in carbohydrate metabolism; D-xylose degradation. Its activity is regulated as follows. NADP(+) is a potent inhibitor of both the NADPH- and NADH-linked xylose reduction, whereas NAD(+) showS strong inhibition only with the NADH-linked reaction. Functionally, reduces D-xylose into xylitol. Has a preference for NADPH, but can also utilize NADH as cosubstrate. The polypeptide is NAD(P)H-dependent D-xylose reductase (XYL1) (Scheffersomyces stipitis (strain ATCC 58785 / CBS 6054 / NBRC 10063 / NRRL Y-11545) (Yeast)).